A 188-amino-acid chain; its full sequence is MLQLHPSDIKDIVLNGGVIAYPTEAVYGLGCDPDNDTAIQKLLAVKQRPWQKGLILVASDFQQLLAYVDESQLTAEQLEFAFSKWPGPFTFVMPIKAQVSKYLCGEFDSIAVRVSAHAGVQALCRALNKPLVSTSANLAGEDPALTAAEILADFTGKIDALVLGELGEQRQPSTIIDARSGKILRNGQ.

The YrdC-like domain occupies 3–188 (QLHPSDIKDI…RSGKILRNGQ (186 aa)).

Belongs to the SUA5 family. TsaC subfamily.

It localises to the cytoplasm. The catalysed reaction is L-threonine + hydrogencarbonate + ATP = L-threonylcarbamoyladenylate + diphosphate + H2O. Functionally, required for the formation of a threonylcarbamoyl group on adenosine at position 37 (t(6)A37) in tRNAs that read codons beginning with adenine. Catalyzes the conversion of L-threonine, HCO(3)(-)/CO(2) and ATP to give threonylcarbamoyl-AMP (TC-AMP) as the acyladenylate intermediate, with the release of diphosphate. In Shewanella putrefaciens (strain CN-32 / ATCC BAA-453), this protein is Threonylcarbamoyl-AMP synthase.